We begin with the raw amino-acid sequence, 422 residues long: N-acylglucosamine 2-epimerase (422 aa).

The segment at 185–206 (LLNLVEQLGEADEELAGISAEL) is leucine-zipper.

The protein belongs to the N-acylglucosamine 2-epimerase family. Homodimer. Forms a heterodimer with renin and inhibits its activity.

It catalyses the reaction an N-acyl-D-glucosamine = an N-acyl-D-mannosamine. It functions in the pathway amino-sugar metabolism; N-acetylneuraminate degradation. Catalyzes the interconversion of N-acetylglucosamine to N-acetylmannosamine. Involved in the N-glycolylneuraminic acid (Neu5Gc) degradation pathway. The sequence is that of N-acylglucosamine 2-epimerase (RENBP) from Bos taurus (Bovine).